Reading from the N-terminus, the 532-residue chain is Probable 1,4-beta-D-glucan cellobiohydrolase B (532 aa).

An N-terminal signal peptide occupies residues 1 to 26; it reads MLASTFSYRMYKTALILAALLGSGQA. The tract at residues 27-461 is catalytic; that stretch reads QQVGTSQAEV…SNIKVGPIGS (435 aa). The Nucleophile role is filled by E238. Catalysis depends on E243, which acts as the Proton donor. N-linked (GlcNAc...) asparagine glycosylation is present at N296. A disordered region spans residues 462–495; the sequence is TFNSGGSNPGGGTTTTTTTQPTTTTTTAGNPGGT. Residues 462–496 are thr-rich linker; the sequence is TFNSGGSNPGGGTTTTTTTQPTTTTTTAGNPGGTG. Positions 475 to 490 are enriched in low complexity; it reads TTTTTTQPTTTTTTAG. A CBM1 domain is found at 496-532; it reads GVAQHYGQCGGIGWTGPTTCASPYTCQKLNDYYSQCL. Disulfide bonds link C504/C521 and C515/C531.

Belongs to the glycosyl hydrolase 7 (cellulase C) family.

The protein resides in the secreted. The enzyme catalyses Hydrolysis of (1-&gt;4)-beta-D-glucosidic linkages in cellulose and cellotetraose, releasing cellobiose from the non-reducing ends of the chains.. The biological conversion of cellulose to glucose generally requires three types of hydrolytic enzymes: (1) Endoglucanases which cut internal beta-1,4-glucosidic bonds; (2) Exocellobiohydrolases that cut the disaccharide cellobiose from the non-reducing end of the cellulose polymer chain; (3) Beta-1,4-glucosidases which hydrolyze the cellobiose and other short cello-oligosaccharides to glucose. The polypeptide is Probable 1,4-beta-D-glucan cellobiohydrolase B (cbhB) (Aspergillus fumigatus (strain CBS 144.89 / FGSC A1163 / CEA10) (Neosartorya fumigata)).